A 1151-amino-acid chain; its full sequence is Cation channel sperm-associated protein subunit gamma 1 (1151 aa).

An N-terminal signal peptide occupies residues 1–38 (MVSRPAMSPVSPVWPRKPNLWAFWVLRLVLLLSLKSWA). The Extracellular segment spans residues 39-1063 (EDTLQHCTWL…GLPLSSKRSS (1025 aa)). Asn356 carries an N-linked (GlcNAc...) asparagine glycan. The chain crosses the membrane as a helical span at residues 1064 to 1084 (FIVMVSTSFFIALVVFYILFC). Residues 1085–1151 (LVWPHIVKAW…NVQAKRAKVA (67 aa)) lie on the Cytoplasmic side of the membrane. Positions 1113–1123 (SSSSGGFTLHS) are enriched in low complexity. The segment at 1113–1151 (SSSSGGFTLHSHSSEGSFEGPSRPGTKEDNVQAKRAKVA) is disordered.

Belongs to the CATSPERG family.

The protein resides in the membrane. The polypeptide is Cation channel sperm-associated protein subunit gamma 1 (Catsperg1) (Mus musculus (Mouse)).